The chain runs to 146 residues: Ribosome maturation factor RimP (146 aa).

Belongs to the RimP family.

The protein localises to the cytoplasm. In terms of biological role, required for maturation of 30S ribosomal subunits. In Helicobacter pylori (strain J99 / ATCC 700824) (Campylobacter pylori J99), this protein is Ribosome maturation factor RimP.